The following is a 491-amino-acid chain: UDP-N-acetylmuramate--L-alanine ligase (491 aa).

126–132 contributes to the ATP binding site; it reads GTHGKTT.

It belongs to the MurCDEF family.

It localises to the cytoplasm. The enzyme catalyses UDP-N-acetyl-alpha-D-muramate + L-alanine + ATP = UDP-N-acetyl-alpha-D-muramoyl-L-alanine + ADP + phosphate + H(+). It functions in the pathway cell wall biogenesis; peptidoglycan biosynthesis. Functionally, cell wall formation. The polypeptide is UDP-N-acetylmuramate--L-alanine ligase (Klebsiella pneumoniae (strain 342)).